The primary structure comprises 143 residues: MAKKIIGFIKLQIPAGKANPSPPVGPALGQRGLNIMEFCKAFNAQTQSMEPGLPIPVVITAFADKSFTFIMKTPPATIMIKKAAKIEKGSPRPHTDKVGKITRAQAEEIAKAKMPDLTAADMDAAVRTIAGSARSMGITVEGL.

The protein belongs to the universal ribosomal protein uL11 family. Part of the ribosomal stalk of the 50S ribosomal subunit. Interacts with L10 and the large rRNA to form the base of the stalk. L10 forms an elongated spine to which L12 dimers bind in a sequential fashion forming a multimeric L10(L12)X complex. Post-translationally, one or more lysine residues are methylated.

Its function is as follows. Forms part of the ribosomal stalk which helps the ribosome interact with GTP-bound translation factors. In Polynucleobacter asymbioticus (strain DSM 18221 / CIP 109841 / QLW-P1DMWA-1) (Polynucleobacter necessarius subsp. asymbioticus), this protein is Large ribosomal subunit protein uL11.